The following is a 140-amino-acid chain: Class I hydrophobin 1 (140 aa).

The N-terminal stretch at 1–18 (MKFAAVVVLAAAAAAVSA) is a signal peptide. The tract at residues 22–60 (AQRMARGLPPKAPIRRHGTPADTEKRSHPSSTGGGQCNT) is disordered. 4 cysteine pairs are disulfide-bonded: Cys-58–Cys-119, Cys-65–Cys-113, Cys-66–Cys-99, and Cys-120–Cys-133.

It belongs to the fungal hydrophobin family. Self-assembles to form functional amyloid fibrils called rodlets. Self-assembly into fibrillar rodlets occurs spontaneously at hydrophobic:hydrophilic interfaces and the rodlets further associate laterally to form amphipathic monolayers.

It localises to the secreted. The protein localises to the cell wall. In terms of biological role, aerial growth, conidiation, and dispersal of filamentous fungi in the environment rely upon a capability of their secreting small amphipathic proteins called hydrophobins (HPBs) with low sequence identity. Class I can self-assemble into an outermost layer of rodlet bundles on aerial cell surfaces, conferring cellular hydrophobicity that supports fungal growth, development and dispersal; whereas Class II form highly ordered films at water-air interfaces through intermolecular interactions but contribute nothing to the rodlet structure. The chain is Class I hydrophobin 1 from Pisolithus tinctorius (Dead man's foot).